Here is a 351-residue protein sequence, read N- to C-terminus: Protein Wnt-8a (351 aa).

An N-terminal signal peptide occupies residues 1 to 24 (MGNLFMLWAALGICCAAFSASAWS). An intrachain disulfide couples C54 to C65. N-linked (GlcNAc...) asparagine glycosylation occurs at N103. Intrachain disulfides connect C104–C112, C114–C132, C180–C194, C182–C189, C259–C297, C275–C290, C294–C336, C312–C327, C314–C324, and C319–C320. S186 is lipidated: O-palmitoleoyl serine. N262 and N281 each carry an N-linked (GlcNAc...) asparagine glycan.

This sequence belongs to the Wnt family. Forms a soluble 1:1 complex with AFM; this prevents oligomerization and is required for prolonged biological activity. The complex with AFM may represent the physiological form in body fluids. In terms of processing, palmitoleoylation is required for efficient binding to frizzled receptors. Depalmitoleoylation leads to Wnt signaling pathway inhibition. Proteolytic processing by TIKI1 and TIKI2 promotes oxidation and formation of large disulfide-bond oligomers, leading to inactivation of WNT8A.

The protein resides in the secreted. It is found in the extracellular space. The protein localises to the extracellular matrix. Ligand for members of the frizzled family of seven transmembrane receptors. Plays a role in embryonic patterning. The polypeptide is Protein Wnt-8a (WNT8A) (Homo sapiens (Human)).